Consider the following 188-residue polypeptide: Elongation factor P (188 aa).

The protein belongs to the elongation factor P family.

It localises to the cytoplasm. It participates in protein biosynthesis; polypeptide chain elongation. In terms of biological role, involved in peptide bond synthesis. Stimulates efficient translation and peptide-bond synthesis on native or reconstituted 70S ribosomes in vitro. Probably functions indirectly by altering the affinity of the ribosome for aminoacyl-tRNA, thus increasing their reactivity as acceptors for peptidyl transferase. The sequence is that of Elongation factor P from Methylobacterium radiotolerans (strain ATCC 27329 / DSM 1819 / JCM 2831 / NBRC 15690 / NCIMB 10815 / 0-1).